The chain runs to 117 residues: G antigen 13 (117 aa).

Residues 1 to 117 form a disordered region; it reads MSWRGRSTYY…PEEGEKQSQC (117 aa). Acidic residues-rich tracts occupy residues 32-45 and 87-96; these read FSDE…EEGE and ECEDGPDGQE. A compositionally biased stretch (basic and acidic residues) spans 103–117; that stretch reads EEVKTPEEGEKQSQC.

The protein belongs to the GAGE family.

The polypeptide is G antigen 13 (Homo sapiens (Human)).